The following is a 475-amino-acid chain: Ribulose bisphosphate carboxylase large chain (475 aa).

Positions 1–2 are excised as a propeptide; that stretch reads MS. Residue Pro-3 is modified to N-acetylproline. Lys-14 carries the N6,N6,N6-trimethyllysine modification. 2 residues coordinate substrate: Asn-123 and Thr-173. Lys-175 acts as the Proton acceptor in catalysis. Lys-177 is a substrate binding site. The Mg(2+) site is built by Lys-201, Asp-203, and Glu-204. Lys-201 is subject to N6-carboxylysine. Residue His-294 is the Proton acceptor of the active site. Residues Arg-295, His-327, and Ser-379 each coordinate substrate.

It belongs to the RuBisCO large chain family. Type I subfamily. As to quaternary structure, heterohexadecamer of 8 large chains and 8 small chains; disulfide-linked. The disulfide link is formed within the large subunit homodimers. Mg(2+) serves as cofactor. The disulfide bond which can form in the large chain dimeric partners within the hexadecamer appears to be associated with oxidative stress and protein turnover.

Its subcellular location is the plastid. The protein resides in the chloroplast. The enzyme catalyses 2 (2R)-3-phosphoglycerate + 2 H(+) = D-ribulose 1,5-bisphosphate + CO2 + H2O. It catalyses the reaction D-ribulose 1,5-bisphosphate + O2 = 2-phosphoglycolate + (2R)-3-phosphoglycerate + 2 H(+). In terms of biological role, ruBisCO catalyzes two reactions: the carboxylation of D-ribulose 1,5-bisphosphate, the primary event in carbon dioxide fixation, as well as the oxidative fragmentation of the pentose substrate in the photorespiration process. Both reactions occur simultaneously and in competition at the same active site. The chain is Ribulose bisphosphate carboxylase large chain from Staurastrum punctulatum (Green alga).